The chain runs to 397 residues: Riboflavin biosynthesis protein RibBA (397 aa).

The interval 1–199 is DHBP synthase; sequence MFHRIEEALE…IEDLIAYRRH (199 aa). D-ribulose 5-phosphate contacts are provided by residues 26-27, D31, 138-142, and E162; these read RE and RAGHT. E27 serves as a coordination point for Mg(2+). H141 is a binding site for Mg(2+). A GTP cyclohydrolase II region spans residues 200 to 397; the sequence is HETLVTREVE…VNKLGHLLNL (198 aa). A GTP-binding site is contributed by 250 to 254; the sequence is RVHSE. Zn(2+) contacts are provided by C255, C266, and C268. GTP contacts are provided by residues Q271, 293–295, and T315; that span reads EGR. Residue D327 is the Proton acceptor; for GTP cyclohydrolase activity of the active site. The Nucleophile; for GTP cyclohydrolase activity role is filled by R329. GTP is bound by residues T350 and K355.

The protein in the N-terminal section; belongs to the DHBP synthase family. In the C-terminal section; belongs to the GTP cyclohydrolase II family. Mg(2+) serves as cofactor. Mn(2+) is required as a cofactor. Requires Zn(2+) as cofactor.

The catalysed reaction is D-ribulose 5-phosphate = (2S)-2-hydroxy-3-oxobutyl phosphate + formate + H(+). The enzyme catalyses GTP + 4 H2O = 2,5-diamino-6-hydroxy-4-(5-phosphoribosylamino)-pyrimidine + formate + 2 phosphate + 3 H(+). The protein operates within cofactor biosynthesis; riboflavin biosynthesis; 2-hydroxy-3-oxobutyl phosphate from D-ribulose 5-phosphate: step 1/1. It functions in the pathway cofactor biosynthesis; riboflavin biosynthesis; 5-amino-6-(D-ribitylamino)uracil from GTP: step 1/4. In terms of biological role, catalyzes the conversion of D-ribulose 5-phosphate to formate and 3,4-dihydroxy-2-butanone 4-phosphate. Catalyzes the conversion of GTP to 2,5-diamino-6-ribosylamino-4(3H)-pyrimidinone 5'-phosphate (DARP), formate and pyrophosphate. The polypeptide is Riboflavin biosynthesis protein RibBA (Bacillus cereus (strain G9842)).